A 333-amino-acid polypeptide reads, in one-letter code: Phenylalanine--tRNA ligase alpha subunit (333 aa).

Glu-258 contributes to the Mg(2+) binding site.

The protein belongs to the class-II aminoacyl-tRNA synthetase family. Phe-tRNA synthetase alpha subunit type 1 subfamily. In terms of assembly, tetramer of two alpha and two beta subunits. Mg(2+) is required as a cofactor.

The protein resides in the cytoplasm. It carries out the reaction tRNA(Phe) + L-phenylalanine + ATP = L-phenylalanyl-tRNA(Phe) + AMP + diphosphate + H(+). In Wigglesworthia glossinidia brevipalpis, this protein is Phenylalanine--tRNA ligase alpha subunit.